The following is a 601-amino-acid chain: uncharacterized protein (601 aa).

Belongs to the chlamydial CPn_1016/CT_858/TC_0248 family.

This is an uncharacterized protein from Chlamydia muridarum (strain MoPn / Nigg).